Here is a 435-residue protein sequence, read N- to C-terminus: Arginine biosynthesis bifunctional protein ArgJ, mitochondrial (435 aa).

Residues Thr-167, Lys-193, Thr-204, Glu-291, Asn-430, and Thr-435 each coordinate substrate. Thr-204 (nucleophile) is an active-site residue.

It belongs to the ArgJ family. In terms of assembly, heterodimer of an alpha and a beta chain. The alpha and beta chains are autoproteolytically processed from a single precursor protein within the mitochondrion.

It localises to the mitochondrion matrix. The catalysed reaction is N(2)-acetyl-L-ornithine + L-glutamate = N-acetyl-L-glutamate + L-ornithine. The enzyme catalyses L-glutamate + acetyl-CoA = N-acetyl-L-glutamate + CoA + H(+). It participates in amino-acid biosynthesis; L-arginine biosynthesis; L-ornithine and N-acetyl-L-glutamate from L-glutamate and N(2)-acetyl-L-ornithine (cyclic): step 1/1. It functions in the pathway amino-acid biosynthesis; L-arginine biosynthesis; N(2)-acetyl-L-ornithine from L-glutamate: step 1/4. Functionally, catalyzes two activities which are involved in the cyclic version of arginine biosynthesis: the synthesis of acetylglutamate from glutamate and acetyl-CoA, and of ornithine by transacetylation between acetylornithine and glutamate. The polypeptide is Arginine biosynthesis bifunctional protein ArgJ, mitochondrial (Heterostelium pallidum (strain ATCC 26659 / Pp 5 / PN500) (Cellular slime mold)).